Reading from the N-terminus, the 369-residue chain is Zeaxanthin 7,8(7',8')-cleavage dioxygenase, chromoplastic (369 aa).

Residues histidine 62, histidine 112, histidine 177, and histidine 356 each coordinate Fe cation.

The protein belongs to the carotenoid oxygenase family. It depends on Fe(2+) as a cofactor. In terms of tissue distribution, in the style branches.

Its subcellular location is the plastid. It localises to the chromoplast. It catalyses the reaction all-trans-zeaxanthin + 2 O2 = crocetin dialdehyde + 2 3beta-hydroxy-beta-cyclocitral. In terms of biological role, cleaves zeaxanthin symmetrically at the 7-8 and 7'-8' double bonds to produce crocetin dialdehyde and hydroxy-beta-cyclocitral, two water-soluble precursors sequestred in vacuoles and involved in the synthesis of saffron pigment and aroma. The sequence is that of Zeaxanthin 7,8(7',8')-cleavage dioxygenase, chromoplastic (ZCD) from Crocus sativus (Saffron).